The sequence spans 442 residues: Protein PhoH2 (442 aa).

The PINc domain occupies 3-135; sequence KIYVLDTNVL…LVSKDVLVRV (133 aa). 259–266 serves as a coordination point for ATP; sequence GKAGTGKT.

This sequence in the N-terminal section; belongs to the PINc/VapC protein family. The protein in the C-terminal section; belongs to the PhoH family.

The catalysed reaction is n ATP + n H2O + wound RNA = n ADP + n phosphate + unwound RNA.. It catalyses the reaction ATP + H2O = ADP + phosphate + H(+). The enzyme catalyses GTP + H2O = GDP + phosphate + H(+). In terms of biological role, unwinds and/or cleaves 5'-tailed RNA in vitro. Has ATPase and GTPase activities. Unlike the protein in mycobacteria there does not seem to be an antitoxin gene upstream, suggesting this is not a toxin-antitoxin system. The protein is Protein PhoH2 of Bacillus subtilis (strain 168).